Here is a 353-residue protein sequence, read N- to C-terminus: UPF0283 membrane protein YcjF (353 aa).

A run of 3 helical transmembrane segments spans residues 70–90, 100–120, and 213–233; these read MVMG…VQWT, VALG…GSVV, and ESTL…FIAW.

It belongs to the UPF0283 family.

Its subcellular location is the cell inner membrane. The sequence is that of UPF0283 membrane protein YcjF from Salmonella schwarzengrund (strain CVM19633).